The chain runs to 583 residues: Ferredoxin--nitrite reductase, chloroplastic (583 aa).

Residues 1-22 (MSSLSVRFLSPPLFSSTPAWPR) constitute a chloroplast transit peptide. [4Fe-4S] cluster is bound by residues cysteine 461, cysteine 467, cysteine 502, and cysteine 506. Cysteine 506 is a binding site for siroheme.

This sequence belongs to the nitrite and sulfite reductase 4Fe-4S domain family. In terms of assembly, monomer. The cofactor is siroheme. [4Fe-4S] cluster is required as a cofactor.

The protein localises to the plastid. The protein resides in the chloroplast. The enzyme catalyses 6 oxidized [2Fe-2S]-[ferredoxin] + NH4(+) + 2 H2O = nitrite + 6 reduced [2Fe-2S]-[ferredoxin] + 8 H(+). Its pathway is nitrogen metabolism; nitrate reduction (assimilation). The chain is Ferredoxin--nitrite reductase, chloroplastic (NIR1) from Betula pendula (European white birch).